The following is a 627-amino-acid chain: Endoglucanase 5 (627 aa).

A signal peptide spans 1-26 (MRKFGGSLFGVSLLLSVLLAAATAAA). Residue D83 is the Nucleophile of the active site. N196 carries an N-linked (GlcNAc...) asparagine glycan. The active site involves H416. N-linked (GlcNAc...) asparagine glycosylation is present at N465. Catalysis depends on residues D468 and E477. The N-linked (GlcNAc...) asparagine glycan is linked to N561.

It belongs to the glycosyl hydrolase 9 (cellulase E) family.

It localises to the secreted. It catalyses the reaction Endohydrolysis of (1-&gt;4)-beta-D-glucosidic linkages in cellulose, lichenin and cereal beta-D-glucans.. The polypeptide is Endoglucanase 5 (Arabidopsis thaliana (Mouse-ear cress)).